Reading from the N-terminus, the 533-residue chain is MIMSGFHIGIYTSICLYIPLPHLEPWIISSHTPKNLNLLDCLLYCSVASYTAIAYKFCTARLIQSERTRENIMGGKLLPAAAFAGSAPPLSQVATSAAHGEDSPYFAGWKAYDEDPYHAVDNPDGVIQMGLAENQVSFDLLEAYLRDHPEAAGWSTGGAGAGSFRDNALFQDYHGLKSFRKAMASFMGKIRGGKARFDPDHIVLTAGATAANELLTFILANPGDALLIPTPYYPGFDRDLRWRTGVNIVPVRCDSANGFQVTVAALQAAYDEAAAVGMRARAVLITNPSNPLGTTVRRKMLDDILDFVSRNDIHLISDEIYSGSVFAAPDLVSVAELVEARGGDGIAGRVHIVYSLSKDLGLPGFRVGVVYSYNDAVVTAARRMSSFTLVSSQTQKTLAAMLSDEAFAGEYIRTNRRRLRERHEHVVAGLARAGVPCLRGNAGLFVWMDMRRLLLGGGGVGGELRLWEKLLRQAKLNISPGSSCHCSEAGWFRVCFANMSLDTLDLALHRISRFMDTWNGTKQQASCQQQEQQ.

K358 carries the post-translational modification N6-(pyridoxal phosphate)lysine.

It belongs to the class-I pyridoxal-phosphate-dependent aminotransferase family. Pyridoxal 5'-phosphate is required as a cofactor. In terms of tissue distribution, expressed in shoots and leaf blades. Expressed at low levels in leaf sheaths. Expressed in vasculature of roots and shoots.

It carries out the reaction S-adenosyl-L-methionine = 1-aminocyclopropane-1-carboxylate + S-methyl-5'-thioadenosine + H(+). It functions in the pathway alkene biosynthesis; ethylene biosynthesis via S-adenosyl-L-methionine; ethylene from S-adenosyl-L-methionine: step 1/2. Catalyzes the formation of 1-aminocyclopropane-1-carboxylate, a direct precursor of ethylene in higher plants. The chain is 1-aminocyclopropane-1-carboxylate synthase 5 from Oryza sativa subsp. japonica (Rice).